Consider the following 379-residue polypeptide: Succinyl-diaminopimelate desuccinylase (379 aa).

Residue H70 coordinates Zn(2+). D72 is a catalytic residue. Residue D103 participates in Zn(2+) binding. Catalysis depends on E137, which acts as the Proton acceptor. Zn(2+) is bound by residues E138, E166, and H352.

This sequence belongs to the peptidase M20A family. DapE subfamily. As to quaternary structure, homodimer. Zn(2+) serves as cofactor. The cofactor is Co(2+).

The enzyme catalyses N-succinyl-(2S,6S)-2,6-diaminopimelate + H2O = (2S,6S)-2,6-diaminopimelate + succinate. It functions in the pathway amino-acid biosynthesis; L-lysine biosynthesis via DAP pathway; LL-2,6-diaminopimelate from (S)-tetrahydrodipicolinate (succinylase route): step 3/3. Catalyzes the hydrolysis of N-succinyl-L,L-diaminopimelic acid (SDAP), forming succinate and LL-2,6-diaminopimelate (DAP), an intermediate involved in the bacterial biosynthesis of lysine and meso-diaminopimelic acid, an essential component of bacterial cell walls. The chain is Succinyl-diaminopimelate desuccinylase from Burkholderia cenocepacia (strain HI2424).